The following is a 512-amino-acid chain: UDP-N-acetylmuramate--L-alanine ligase (512 aa).

Position 132–138 (132–138) interacts with ATP; that stretch reads GAHGKTT.

This sequence belongs to the MurCDEF family.

It is found in the cytoplasm. The catalysed reaction is UDP-N-acetyl-alpha-D-muramate + L-alanine + ATP = UDP-N-acetyl-alpha-D-muramoyl-L-alanine + ADP + phosphate + H(+). The protein operates within cell wall biogenesis; peptidoglycan biosynthesis. Functionally, cell wall formation. This is UDP-N-acetylmuramate--L-alanine ligase from Bifidobacterium longum (strain NCC 2705).